The primary structure comprises 485 residues: MTITPQHLIALLPLLIVGLTVVVVMLSIAWRRNHFLNATLSVIGLNAALVSLWFVGQAGAMDVTPLMRVDGFAMLYTGLVLLASLATCTFAYPWLEGYNDNQEEFYLLVLIASLGGILLANANHLATLFLGIELISLPLFGLIGYAFRQKRSLEASIKYTILSAAASSFLLFGMALVYAQSGNLSFEALGKSLGDGMLHEPLLLAGFGLMIVGPGFKLSLVPFHLWTPDVYQGAPAPVSTFLATASKIAIFGVVMRLFLYAPVGDSEAVRVVLGIIAFASIIFGNLMALSQTNIKRLLGYSSISHLGYLLVALIALQSGEMSMEAVGVYLAGYLFSSLGAFGVVSLMSSPFRGPDADSLYSYRGLFWHRPVLAAVMTVMMLSLAGIPMTLGFIGKFYVLAVGVQASLWWLVAAVVVGSAIGLYYYLRVAVSLYLHAPQQPGRDAPTNWQYSAGGIVVLISALLVLVLGVWPQPLISLVQLATPLM.

The next 14 membrane-spanning stretches (helical) occupy residues 8-28, 35-55, 71-91, 105-125, 127-147, 159-179, 203-223, 235-255, 271-291, 297-317, 326-346, 373-393, 408-430, and 455-475; these read LIAL…MLSI, FLNA…LWFV, GFAM…CTFA, FYLL…ANHL, TLFL…GYAF, YTIL…LVYA, LLAG…LVPF, PAPV…GVVM, VVLG…ALSQ, LLGY…IALQ, VGVY…VVSL, AAVM…LGFI, WWLV…RVAV, and IVVL…QPLI.

Belongs to the complex I subunit 2 family. In terms of assembly, NDH-1 is composed of 13 different subunits. Subunits NuoA, H, J, K, L, M, N constitute the membrane sector of the complex.

It is found in the cell inner membrane. It carries out the reaction a quinone + NADH + 5 H(+)(in) = a quinol + NAD(+) + 4 H(+)(out). NDH-1 shuttles electrons from NADH, via FMN and iron-sulfur (Fe-S) centers, to quinones in the respiratory chain. The immediate electron acceptor for the enzyme in this species is believed to be ubiquinone. Couples the redox reaction to proton translocation (for every two electrons transferred, four hydrogen ions are translocated across the cytoplasmic membrane), and thus conserves the redox energy in a proton gradient. This Salmonella paratyphi A (strain ATCC 9150 / SARB42) protein is NADH-quinone oxidoreductase subunit N.